The sequence spans 104 residues: Iron-sulfur cluster assembly protein CyaY (104 aa).

The protein belongs to the frataxin family.

Its function is as follows. Involved in iron-sulfur (Fe-S) cluster assembly. May act as a regulator of Fe-S biogenesis. This is Iron-sulfur cluster assembly protein CyaY from Aliivibrio fischeri (strain MJ11) (Vibrio fischeri).